A 440-amino-acid chain; its full sequence is Chromosome partition protein MukF (440 aa).

The segment at Leu208 to Ile236 is leucine-zipper.

It belongs to the MukF family. As to quaternary structure, interacts, and probably forms a ternary complex, with MukE and MukB via its C-terminal region. The complex formation is stimulated by calcium or magnesium. It is required for an interaction between MukE and MukB.

Its subcellular location is the cytoplasm. The protein localises to the nucleoid. Its function is as follows. Involved in chromosome condensation, segregation and cell cycle progression. May participate in facilitating chromosome segregation by condensation DNA from both sides of a centrally located replisome during cell division. Not required for mini-F plasmid partitioning. Probably acts via its interaction with MukB and MukE. Overexpression results in anucleate cells. It has a calcium binding activity. This chain is Chromosome partition protein MukF, found in Salmonella paratyphi B (strain ATCC BAA-1250 / SPB7).